The chain runs to 160 residues: Ribosomal RNA large subunit methyltransferase H (160 aa).

S-adenosyl-L-methionine contacts are provided by residues Gly108 and 127–132 (FGKMTW).

The protein belongs to the RNA methyltransferase RlmH family. As to quaternary structure, homodimer.

The protein localises to the cytoplasm. The enzyme catalyses pseudouridine(1915) in 23S rRNA + S-adenosyl-L-methionine = N(3)-methylpseudouridine(1915) in 23S rRNA + S-adenosyl-L-homocysteine + H(+). Its function is as follows. Specifically methylates the pseudouridine at position 1915 (m3Psi1915) in 23S rRNA. This Beijerinckia indica subsp. indica (strain ATCC 9039 / DSM 1715 / NCIMB 8712) protein is Ribosomal RNA large subunit methyltransferase H.